We begin with the raw amino-acid sequence, 461 residues long: Steroidogenic factor 1 (461 aa).

The segment at residues 10–85 (DELCPVCGDK…VGMRLEAVRA (76 aa)) is a DNA-binding region (nuclear receptor). Residues 13–33 (CPVCGDKVSGYHYGLLTCESC) form an NR C4-type zinc finger. Lys34, Lys38, and Lys72 each carry N6-acetyllysine. Residues 49–73 (CTESQSCKIDKTLRKRCPFCRFQKC) form an NR C4-type zinc finger. A Glycyl lysine isopeptide (Lys-Gly) (interchain with G-Cter in SUMO) cross-link involves residue Lys119. Residues 119-153 (KLETGPPMGVPPPPPPPPDYMLPPGLHVPEPKGLA) form a disordered region. Pro residues predominate over residues 126–139 (MGVPPPPPPPPDYM). Residue Lys194 forms a Glycyl lysine isopeptide (Lys-Gly) (interchain with G-Cter in SUMO) linkage. Phosphoserine; by CDK7 is present on Ser203. The region spanning 222-459 (GVPELILQLL…NLLIEMLQAK (238 aa)) is the NR LBD domain. 3 residues coordinate a 1,2-diacyl-sn-glycero-3-phosphocholine: Gly341, Tyr436, and Lys440.

The protein belongs to the nuclear hormone receptor family. NR5 subfamily. Binds DNA as a monomer. Part of a complex consisting of SFPQ, NONO and NR5A1. Interacts with NR0B2. Interacts with DGKQ and CDK7. Binds to and activated by HIPK3. In terms of processing, acetylation stimulates the transcriptional activity. Post-translationally, sumoylation reduces CDK7-mediated phosphorylation on Ser-203. Phosphorylated on Ser-203 by CDK7. This phosphorylation promotes transcriptional activity.

It localises to the nucleus. Its function is as follows. Transcriptional activator. Seems to be essential for sexual differentiation and formation of the primary steroidogenic tissues. Binds to the Ad4 site found in the promoter region of steroidogenic P450 genes such as CYP11A, CYP11B and CYP21B. Also regulates the AMH/Muellerian inhibiting substance gene as well as the AHCH and STAR genes. 5'-YCAAGGYC-3' and 5'-RRAGGTCA-3' are the consensus sequences for the recognition by NR5A1. The SFPQ-NONO-NR5A1 complex binds to the CYP17 promoter and regulates basal and cAMP-dependent transcriptional activity. Binds phospholipids with a phosphatidylinositol (PI) headgroup, in particular PI(3,4)P2 and PI(3,4,5)P3. Activated by the phosphorylation of NR5A1 by HIPK3 leading to increased steroidogenic gene expression upon cAMP signaling pathway stimulation. This chain is Steroidogenic factor 1 (NR5A1), found in Equus caballus (Horse).